Reading from the N-terminus, the 224-residue chain is Octanoyltransferase (224 aa).

The region spanning 33-213 (GTTAETMLLL…ALQAEFGREA (181 aa)) is the BPL/LPL catalytic domain. Residues 51 to 71 (GKRTTDDERPTDGTPVVDVDR) form a disordered region. Substrate is bound by residues 71–78 (RGGKITWH), 143–145 (AIG), and 156–158 (GFA). Cys174 functions as the Acyl-thioester intermediate in the catalytic mechanism.

It belongs to the LipB family.

The protein localises to the cytoplasm. It carries out the reaction octanoyl-[ACP] + L-lysyl-[protein] = N(6)-octanoyl-L-lysyl-[protein] + holo-[ACP] + H(+). It participates in protein modification; protein lipoylation via endogenous pathway; protein N(6)-(lipoyl)lysine from octanoyl-[acyl-carrier-protein]: step 1/2. Functionally, catalyzes the transfer of endogenously produced octanoic acid from octanoyl-acyl-carrier-protein onto the lipoyl domains of lipoate-dependent enzymes. Lipoyl-ACP can also act as a substrate although octanoyl-ACP is likely to be the physiological substrate. The sequence is that of Octanoyltransferase from Leifsonia xyli subsp. xyli (strain CTCB07).